A 118-amino-acid polypeptide reads, in one-letter code: Ribonuclease P protein component (118 aa).

The protein belongs to the RnpA family. Consists of a catalytic RNA component (M1 or rnpB) and a protein subunit.

The catalysed reaction is Endonucleolytic cleavage of RNA, removing 5'-extranucleotides from tRNA precursor.. Its function is as follows. RNaseP catalyzes the removal of the 5'-leader sequence from pre-tRNA to produce the mature 5'-terminus. It can also cleave other RNA substrates such as 4.5S RNA. The protein component plays an auxiliary but essential role in vivo by binding to the 5'-leader sequence and broadening the substrate specificity of the ribozyme. This chain is Ribonuclease P protein component, found in Shewanella oneidensis (strain ATCC 700550 / JCM 31522 / CIP 106686 / LMG 19005 / NCIMB 14063 / MR-1).